We begin with the raw amino-acid sequence, 97 residues long: UstYa family oxidase VicYc (97 aa).

Short sequence motifs (HXXHC) lie at residues 11-15 and 38-42; these read HELHC and HANHC.

The protein belongs to the ustYa family.

The protein operates within mycotoxin biosynthesis. UstYa family oxidase, part of the gene cluster that mediates the biosynthesis of the secondary metabolite victorin, the molecular basis for Victoria blight of oats. The role of vicYc within the pathway has still to be determined. The pathway starts with the processing of the precursor vicA1 by several endopeptidases including kexin proteases as well as the cluster-specific S28 family peptidases vicPa and vicPb to produce 7 identical copies of the hexapeptide Gly-Leu-Lys-Leu-Ala-Phe. After being excised from the precursor peptide, the core peptides are cyclized and modified post-translationally by enzymes encoded within the gene cluster. The ustYa family oxidase vicYb is required for the formation of the macrocycle in victorin and the copper amine oxidases (CAOs) vicK1 and vicK2 are responsible for converting victorin to the active form by oxidizing the N-terminal glycyl residue in the peptides to glyoxylate. Relaxed substrate specificity of enzymes in the victorin biosynthetic pathway results in a metabolic grid that produces a set of analogs including victorinines B, C, E or HV-toxin M. In Bipolaris victoriae (strain FI3) (Victoria blight of oats agent), this protein is UstYa family oxidase VicYc.